The primary structure comprises 98 residues: NADH-ubiquinone oxidoreductase chain 4L (98 aa).

Helical transmembrane passes span 1–21 (MSLV…GLLM), 29–49 (SLLC…LTIL), and 61–81 (IILL…LVMV).

Belongs to the complex I subunit 4L family. Core subunit of respiratory chain NADH dehydrogenase (Complex I) which is composed of 45 different subunits.

It is found in the mitochondrion inner membrane. The catalysed reaction is a ubiquinone + NADH + 5 H(+)(in) = a ubiquinol + NAD(+) + 4 H(+)(out). Functionally, core subunit of the mitochondrial membrane respiratory chain NADH dehydrogenase (Complex I) which catalyzes electron transfer from NADH through the respiratory chain, using ubiquinone as an electron acceptor. Part of the enzyme membrane arm which is embedded in the lipid bilayer and involved in proton translocation. The sequence is that of NADH-ubiquinone oxidoreductase chain 4L (MT-ND4L) from Muntiacus feae (Fea's muntjac).